The sequence spans 269 residues: Exodeoxyribonuclease WalJ (269 aa).

5 residues coordinate a divalent metal cation: H61, H63, D65, H66, and D150.

It belongs to the metallo-beta-lactamase superfamily. It depends on Fe(2+) as a cofactor. Zn(2+) is required as a cofactor. The cofactor is Mn(2+).

Its subcellular location is the cell membrane. In terms of biological role, 5'-&gt;3' double-stranded DNA exonuclease. May be involved in the WalK/WalR signal transduction pathway. Required for accurate coordination of cell division with DNA replication. May play a role in cell wall metabolism. The sequence is that of Exodeoxyribonuclease WalJ from Streptococcus pneumoniae serotype 2 (strain D39 / NCTC 7466).